Reading from the N-terminus, the 1067-residue chain is Chitinase-like protein C25A8.4 (1067 aa).

The first 18 residues, 1-18, serve as a signal peptide directing secretion; it reads MGIKTLIWLSILVVGIYC. GH18 domains lie at 26–364, 372–727, and 743–1067; these read PVHY…IRNT, CTRL…QVCQ, and FVVS…HKCR. A disulfide bridge links C30 with C51. 2 N-linked (GlcNAc...) asparagine glycosylation sites follow: N47 and N216. The cysteines at positions 376 and 397 are disulfide-linked. N-linked (GlcNAc...) asparagine glycans are attached at residues N475, N538, and N710. C747 and C768 are joined by a disulfide. 2 N-linked (GlcNAc...) asparagine glycosylation sites follow: N797 and N830. The active-site Proton donor is the E855. N-linked (GlcNAc...) asparagine glycosylation is found at N887, N933, and N1010.

Belongs to the glycosyl hydrolase 18 family.

Its subcellular location is the secreted. Functionally, putative chitinase. This Caenorhabditis elegans protein is Chitinase-like protein C25A8.4 (cht-3).